The chain runs to 604 residues: Glutamine--fructose-6-phosphate aminotransferase [isomerizing] (604 aa).

The Nucleophile; for GATase activity role is filled by Cys2. One can recognise a Glutamine amidotransferase type-2 domain in the interval Cys2–Asp218. SIS domains are found at residues Ile284–Lys423 and Val456–Pro594. The active-site For Fru-6P isomerization activity is Lys599.

As to quaternary structure, homodimer.

It localises to the cytoplasm. It carries out the reaction D-fructose 6-phosphate + L-glutamine = D-glucosamine 6-phosphate + L-glutamate. Its function is as follows. Catalyzes the first step in hexosamine metabolism, converting fructose-6P into glucosamine-6P using glutamine as a nitrogen source. The polypeptide is Glutamine--fructose-6-phosphate aminotransferase [isomerizing] (Streptococcus pyogenes serotype M1).